Here is a 399-residue protein sequence, read N- to C-terminus: 4-hydroxy-3-methylbut-2-enyl diphosphate reductase (399 aa).

Residue cysteine 66 coordinates [4Fe-4S] cluster. Position 96 (histidine 96) interacts with (2E)-4-hydroxy-3-methylbut-2-enyl diphosphate. Histidine 96 provides a ligand contact to dimethylallyl diphosphate. Histidine 96 serves as a coordination point for isopentenyl diphosphate. Position 157 (cysteine 157) interacts with [4Fe-4S] cluster. A (2E)-4-hydroxy-3-methylbut-2-enyl diphosphate-binding site is contributed by histidine 185. Histidine 185 is a dimethylallyl diphosphate binding site. Histidine 185 contacts isopentenyl diphosphate. Catalysis depends on glutamate 187, which acts as the Proton donor. Position 250 (threonine 250) interacts with (2E)-4-hydroxy-3-methylbut-2-enyl diphosphate. Residue cysteine 288 coordinates [4Fe-4S] cluster. The (2E)-4-hydroxy-3-methylbut-2-enyl diphosphate site is built by serine 317, serine 318, asparagine 319, and serine 380. The dimethylallyl diphosphate site is built by serine 317, serine 318, asparagine 319, and serine 380. 4 residues coordinate isopentenyl diphosphate: serine 317, serine 318, asparagine 319, and serine 380.

This sequence belongs to the IspH family. [4Fe-4S] cluster serves as cofactor.

It carries out the reaction isopentenyl diphosphate + 2 oxidized [2Fe-2S]-[ferredoxin] + H2O = (2E)-4-hydroxy-3-methylbut-2-enyl diphosphate + 2 reduced [2Fe-2S]-[ferredoxin] + 2 H(+). It catalyses the reaction dimethylallyl diphosphate + 2 oxidized [2Fe-2S]-[ferredoxin] + H2O = (2E)-4-hydroxy-3-methylbut-2-enyl diphosphate + 2 reduced [2Fe-2S]-[ferredoxin] + 2 H(+). It functions in the pathway isoprenoid biosynthesis; dimethylallyl diphosphate biosynthesis; dimethylallyl diphosphate from (2E)-4-hydroxy-3-methylbutenyl diphosphate: step 1/1. Its pathway is isoprenoid biosynthesis; isopentenyl diphosphate biosynthesis via DXP pathway; isopentenyl diphosphate from 1-deoxy-D-xylulose 5-phosphate: step 6/6. Its function is as follows. Catalyzes the conversion of 1-hydroxy-2-methyl-2-(E)-butenyl 4-diphosphate (HMBPP) into a mixture of isopentenyl diphosphate (IPP) and dimethylallyl diphosphate (DMAPP). Acts in the terminal step of the DOXP/MEP pathway for isoprenoid precursor biosynthesis. This Synechococcus sp. (strain CC9605) protein is 4-hydroxy-3-methylbut-2-enyl diphosphate reductase.